A 642-amino-acid polypeptide reads, in one-letter code: Forkhead box protein K2 (642 aa).

One can recognise an FHA domain in the interval 30–91 (VTIGRNSSQG…NGVFVDGVFQ (62 aa)). The disordered stretch occupies residues 201–221 (QSENDKDASGGDSPKDDSKPP). The span at 203–219 (ENDKDASGGDSPKDDSK) shows a compositional bias: basic and acidic residues. The fork-head DNA-binding region spans 219-314 (KPPYSYAQLI…EQAFRKRRPR (96 aa)). The interval 261–279 (KGWQNSIRHNLSLNRYFIK) is DNA-binding; major groove. The Mg(2+) site is built by L271, S272, N274, and F277. DNA-binding; minor groove stretches follow at residues 289 to 293 (KGSFW) and 309 to 314 (RKRRPR). Disordered regions lie at residues 323-359 (LGPL…REGS) and 589-615 (ASAS…KTDE). Polar residues-rich tracts occupy residues 327 to 353 (SSRS…TPES) and 589 to 605 (ASAS…QSEQ). The segment covering 606–615 (PDIKRGKTDE) has biased composition (basic and acidic residues).

In neurula embryos, expressed strongly in the future floor plate and weakly in the neural crest progenitor cells. As development progresses, expression becomes stronger in neural crest cells. At stage 24, expressed in the eye, brain, branchial arches and in the presomitic mesoderm in the posterior embryo. At stage 29, additionally expressed in the pronephric tubules. At stage 35, expressed in the migrating lateral muscle precursors of the abdomen. Additionally, the developing proctodeum and head structures including the branchial arches, eyes and otic vesicles continue to show expression. Expression also persists in the nephros.

The protein localises to the nucleus. Its subcellular location is the cytoplasm. Its function is as follows. Transcriptional regulator involved in different processes such as glucose metabolism, aerobic glycolysis and autophagy. Recognizes and binds the forkhead DNA sequence motif (5'-GTAAACA-3') and can both act as a transcription activator or repressor, depending on the context. Acts as a key regulator of metabolic reprogramming towards aerobic glycolysis, a process in which glucose is converted to lactate in the presence of oxygen. Acts as a negative regulator of autophagy in skeletal muscle: in response to starvation, enters the nucleus, binds the promoters of autophagy genes and represses their expression, preventing proteolysis of skeletal muscle proteins. In Xenopus laevis (African clawed frog), this protein is Forkhead box protein K2.